A 172-amino-acid chain; its full sequence is Ribosome maturation factor RimM (172 aa).

One can recognise a PRC barrel domain in the interval Glu-96–Leu-168.

The protein belongs to the RimM family. As to quaternary structure, binds ribosomal protein uS19.

It is found in the cytoplasm. Functionally, an accessory protein needed during the final step in the assembly of 30S ribosomal subunit, possibly for assembly of the head region. Essential for efficient processing of 16S rRNA. May be needed both before and after RbfA during the maturation of 16S rRNA. It has affinity for free ribosomal 30S subunits but not for 70S ribosomes. The protein is Ribosome maturation factor RimM of Streptococcus pyogenes serotype M28 (strain MGAS6180).